Here is a 219-residue protein sequence, read N- to C-terminus: Deoxyribose-phosphate aldolase (219 aa).

The Proton donor/acceptor role is filled by aspartate 92. The Schiff-base intermediate with acetaldehyde role is filled by lysine 154. Catalysis depends on lysine 183, which acts as the Proton donor/acceptor.

The protein belongs to the DeoC/FbaB aldolase family. DeoC type 1 subfamily.

It localises to the cytoplasm. It catalyses the reaction 2-deoxy-D-ribose 5-phosphate = D-glyceraldehyde 3-phosphate + acetaldehyde. It participates in carbohydrate degradation; 2-deoxy-D-ribose 1-phosphate degradation; D-glyceraldehyde 3-phosphate and acetaldehyde from 2-deoxy-alpha-D-ribose 1-phosphate: step 2/2. In terms of biological role, catalyzes a reversible aldol reaction between acetaldehyde and D-glyceraldehyde 3-phosphate to generate 2-deoxy-D-ribose 5-phosphate. This Dictyoglomus turgidum (strain DSM 6724 / Z-1310) protein is Deoxyribose-phosphate aldolase.